Reading from the N-terminus, the 211-residue chain is Cytidylate kinase (211 aa).

9–17 (GPAAAGKGT) is an ATP binding site.

It belongs to the cytidylate kinase family. Type 1 subfamily.

The protein resides in the cytoplasm. It carries out the reaction CMP + ATP = CDP + ADP. It catalyses the reaction dCMP + ATP = dCDP + ADP. The polypeptide is Cytidylate kinase (Paramagnetospirillum magneticum (strain ATCC 700264 / AMB-1) (Magnetospirillum magneticum)).